Here is a 117-residue protein sequence, read N- to C-terminus: Large ribosomal subunit protein bL19 (117 aa).

Belongs to the bacterial ribosomal protein bL19 family.

Its function is as follows. This protein is located at the 30S-50S ribosomal subunit interface and may play a role in the structure and function of the aminoacyl-tRNA binding site. In Bacteroides thetaiotaomicron (strain ATCC 29148 / DSM 2079 / JCM 5827 / CCUG 10774 / NCTC 10582 / VPI-5482 / E50), this protein is Large ribosomal subunit protein bL19.